The sequence spans 416 residues: Adipocyte plasma membrane-associated protein (416 aa).

Residues 1-32 (MSEADGLRQRRPLRPQVVTDDDGQAPEAKDGS) are disordered. An N-acetylserine modification is found at serine 2. Over 2–40 (SEADGLRQRRPLRPQVVTDDDGQAPEAKDGSSFSGRVFR) the chain is Cytoplasmic. The residue at position 19 (threonine 19) is a Phosphothreonine. The helical; Signal-anchor for type II membrane protein transmembrane segment at 41 to 61 (VTFLMLAVSLTVPLLGAMMLL) threads the bilayer. Over 62 to 416 (ESPIDPQPLS…FLCRLSLQAV (355 aa)) the chain is Extracellular. 2 N-linked (GlcNAc...) asparagine glycosylation sites follow: asparagine 160 and asparagine 196.

This sequence belongs to the strictosidine synthase family. As to expression, liver, glomerular and tubular structures of the kidney, endothelial cells, arterial wall and pancreatic islets of Langerhans (at protein level). Found ubiquitously in adult as well as in embryonic tissues. In adult tissue, the highest expression is found in the liver, placenta and heart. Found on the cell surface of monocytes. In embryonic tissue, the highest expression levels is found in the liver and the kidney.

The protein resides in the membrane. Exhibits strong arylesterase activity with beta-naphthyl acetate and phenyl acetate. May play a role in adipocyte differentiation. The chain is Adipocyte plasma membrane-associated protein (APMAP) from Homo sapiens (Human).